The chain runs to 467 residues: Probable amino acid permease 7 (467 aa).

Topologically, residues 1–29 (MDIKEDDESRVITPTELQLHDSVTARTGT) are cytoplasmic. A helical transmembrane segment spans residues 30–50 (LWTAVAHIITGVIGAGVLSLA). Residues 51–58 (WATAELGW) are Extracellular-facing. Residues 59-79 (IAGPAALIAFAGVTLLSAFLL) form a helical membrane-spanning segment. Residues 80-111 (SDCYRFPDPNNGPLRLNSYSQAVKLYLGKKNE) are Cytoplasmic-facing. The helical transmembrane segment at 112-132 (IVCGVVVYISLFGCGIAYTIV) threads the bilayer. Topologically, residues 133–163 (IATCSRAIMKSNCYHRNGHNATCSYGDNNNY) are extracellular. The next 2 membrane-spanning stretches (helical) occupy residues 164-184 (FMVL…FHNM) and 185-205 (VWLS…GIGL). Topologically, residues 206 to 231 (ALGKIIENRKIEGSIRGIPAENRGEK) are extracellular. Residues 232 to 252 (VWIVFQALGNIAFSYPFSIIL) form a helical membrane-spanning segment. At 253–274 (LEIQDTLRSPPAEKQTMKKAST) the chain is on the cytoplasmic side. Residues 275–295 (VAVFIQTFFFFCCGCFGYAAF) form a helical membrane-spanning segment. Residues 296-312 (GDSTPGNLLTGFGFYEP) are Extracellular-facing. The helical transmembrane segment at 313–333 (FWLVDFANACIVLHLVGGYQV) threads the bilayer. Topologically, residues 334–383 (YSQPIFAAAERSLTKKYPENKFIARFYGFKLPLLRGETVRLNPMRMCLRT) are cytoplasmic. 2 helical membrane passes run 384–404 (MYVL…EVLG) and 405–425 (VVGA…MCIL). The Cytoplasmic segment spans residues 426–443 (QKKIRSWTRPWLLLRGFS). A helical membrane pass occupies residues 444–464 (FVCLLVCLLSLVGSIYGLVGA). The Extracellular portion of the chain corresponds to 465–467 (KFG).

It belongs to the amino acid/polyamine transporter 2 family. Amino acid/auxin permease (AAAP) (TC 2.A.18.2) subfamily.

Its subcellular location is the cell membrane. Functionally, amino acid-proton symporter. Stereospecific transporter with a broad specificity for neutral amino acids. The chain is Probable amino acid permease 7 (AAP7) from Arabidopsis thaliana (Mouse-ear cress).